A 443-amino-acid chain; its full sequence is Major royal jelly protein 7 (443 aa).

The first 17 residues, 1-17, serve as a signal peptide directing secretion; it reads MTRWLFMVACLGIACQG. 4 N-linked (GlcNAc...) asparagine glycosylation sites follow: asparagine 145, asparagine 161, asparagine 178, and asparagine 321.

This sequence belongs to the major royal jelly protein family. In terms of tissue distribution, found in and secreted from the hypopharyngeal glands of the worker honey bee (at protein level); expression peaks at 12 days post eclosion. Expressed in the brains of adult worker bees peaking at 12 days post eclosion (at protein level). Expressed in the spermatheca of adult queen bees (at protein level); Expression levels are higher in mated queens than in virgin queens.

The protein resides in the secreted. Its function is as follows. Component of royal jelly, a substance produced in the hypopharyngeal gland containing proteins, free amino acids, fatty acids, sugars and other nutrients, which is fed to developing larvae by worker nurse bees. All larvae are fed some royal jelly (also known as worker jelly) early in their development but it forms the principal source of nutrition for larvae destined to become queen bees. Produced in the spermatheca of adult queen bees, along with other major royal jelly proteins, where it may act as a nutrient supply for sperm stored by mated queens, or be involved in energy metabolism. The sequence is that of Major royal jelly protein 7 from Apis mellifera (Honeybee).